The following is a 356-amino-acid chain: MSLLSDLINLNLSDATDKVIAEYIWIGGSGTDLRSKARTLTGPVNHPSKLPKWNYDGSSTGQAPGEDSEVIYILRQFFKDPFRRGNNILVICDTYTPAGEPIPTNKRHGAAKIFSHPEVVAEVPWYGIEQEYTLLQKDVKWPLGWPVGGYPGPQGPYYCGIGADKAWGRDIVDAHYKACLYAGINISGINGEVMPGQWEFQVGPSVGISAGDEVWAARYILERITEIAGVVLSLDPKPIQGDWNGAGAHTNYSTKSMRNNGGYEIIKKAIEKLGLRHKEHIAAYGEGNERRLTGRHETADINTFKWGVANRGASIRVGRDTEKEGKGYFEDRRPASNMDPYVVTSMIAETTLLWKP.

Residues 19–99 (VIAEYIWIGG…VICDTYTPAG (81 aa)) form the GS beta-grasp domain. Residues 106–356 (KRHGAAKIFS…IAETTLLWKP (251 aa)) form the GS catalytic domain.

The protein belongs to the glutamine synthetase family. As to quaternary structure, homooctamer. As to expression, found at highest levels in root nodules.

Its subcellular location is the cytoplasm. The catalysed reaction is L-glutamate + NH4(+) + ATP = L-glutamine + ADP + phosphate + H(+). This is Glutamine synthetase (GLN1) from Alnus glutinosa (European alder).